A 370-amino-acid polypeptide reads, in one-letter code: 3-isopropylmalate dehydrogenase (370 aa).

An NAD(+)-binding site is contributed by Gly77–Glu90. Arg97, Arg107, Arg135, and Asp226 together coordinate substrate. Mg(2+) is bound by residues Asp226, Asp250, and Asp254. Residue Gly290–Asn302 participates in NAD(+) binding.

Belongs to the isocitrate and isopropylmalate dehydrogenases family. LeuB type 1 subfamily. As to quaternary structure, homodimer. The cofactor is Mg(2+). It depends on Mn(2+) as a cofactor.

It is found in the cytoplasm. It carries out the reaction (2R,3S)-3-isopropylmalate + NAD(+) = 4-methyl-2-oxopentanoate + CO2 + NADH. Its pathway is amino-acid biosynthesis; L-leucine biosynthesis; L-leucine from 3-methyl-2-oxobutanoate: step 3/4. Functionally, catalyzes the oxidation of 3-carboxy-2-hydroxy-4-methylpentanoate (3-isopropylmalate) to 3-carboxy-4-methyl-2-oxopentanoate. The product decarboxylates to 4-methyl-2 oxopentanoate. This Brucella melitensis biotype 1 (strain ATCC 23456 / CCUG 17765 / NCTC 10094 / 16M) protein is 3-isopropylmalate dehydrogenase.